Reading from the N-terminus, the 155-residue chain is MPKFIEGKLDAKGLRFGIVVGRFNSFISERLLEGALDALIRHGADDKNIDVARVPGAFEIPLATKKMAATGRYDAIICLGAVIRGATPHFDYVAAEVSKGVAHVSLDSGVPVAFGVLTTDTIEQAVERAGTKAGNKGFDSAVTAIETANLFKGIK.

5-amino-6-(D-ribitylamino)uracil is bound by residues Phe23, 57-59 (AFE), and 81-83 (AVI). (2S)-2-hydroxy-3-oxobutyl phosphate is bound at residue 86–87 (AT). His89 functions as the Proton donor in the catalytic mechanism. 5-amino-6-(D-ribitylamino)uracil is bound at residue Phe114. Arg128 provides a ligand contact to (2S)-2-hydroxy-3-oxobutyl phosphate.

It belongs to the DMRL synthase family.

It catalyses the reaction (2S)-2-hydroxy-3-oxobutyl phosphate + 5-amino-6-(D-ribitylamino)uracil = 6,7-dimethyl-8-(1-D-ribityl)lumazine + phosphate + 2 H2O + H(+). It functions in the pathway cofactor biosynthesis; riboflavin biosynthesis; riboflavin from 2-hydroxy-3-oxobutyl phosphate and 5-amino-6-(D-ribitylamino)uracil: step 1/2. In terms of biological role, catalyzes the formation of 6,7-dimethyl-8-ribityllumazine by condensation of 5-amino-6-(D-ribitylamino)uracil with 3,4-dihydroxy-2-butanone 4-phosphate. This is the penultimate step in the biosynthesis of riboflavin. This Geotalea uraniireducens (strain Rf4) (Geobacter uraniireducens) protein is 6,7-dimethyl-8-ribityllumazine synthase.